A 496-amino-acid chain; its full sequence is Apolipoprotein N-acyltransferase (496 aa).

6 helical membrane-spanning segments follow: residues 6–26 (IICL…FFIP), 50–70 (FGYL…SIGV), 77–97 (FWWA…FFIS), 114–134 (LIFC…LTGL), 148–168 (ILIQ…VIYI), and 183–203 (LKIL…YGAV). Positions 220 to 464 (VQPSIPQTAK…QGLIPQKLTT (245 aa)) constitute a CN hydrolase domain. The Proton acceptor role is filled by Glu259. Residue Lys322 is part of the active site. Cys372 acts as the Nucleophile in catalysis. Residues 474–494 (FAMLLSIVFIILIHYLLSLIF) traverse the membrane as a helical segment.

Belongs to the CN hydrolase family. Apolipoprotein N-acyltransferase subfamily.

It is found in the cell inner membrane. The catalysed reaction is N-terminal S-1,2-diacyl-sn-glyceryl-L-cysteinyl-[lipoprotein] + a glycerophospholipid = N-acyl-S-1,2-diacyl-sn-glyceryl-L-cysteinyl-[lipoprotein] + a 2-acyl-sn-glycero-3-phospholipid + H(+). It participates in protein modification; lipoprotein biosynthesis (N-acyl transfer). In terms of biological role, catalyzes the phospholipid dependent N-acylation of the N-terminal cysteine of apolipoprotein, the last step in lipoprotein maturation. This Rickettsia prowazekii (strain Madrid E) protein is Apolipoprotein N-acyltransferase.